The primary structure comprises 267 residues: Glucosamine-6-phosphate deaminase (267 aa).

Asp72 acts as the Proton acceptor; for enolization step in catalysis. Asp141 serves as the catalytic For ring-opening step. Catalysis depends on His143, which acts as the Proton acceptor; for ring-opening step. Glu148 functions as the For ring-opening step in the catalytic mechanism.

It belongs to the glucosamine/galactosamine-6-phosphate isomerase family. NagB subfamily.

The catalysed reaction is alpha-D-glucosamine 6-phosphate + H2O = beta-D-fructose 6-phosphate + NH4(+). The protein operates within amino-sugar metabolism; N-acetylneuraminate degradation; D-fructose 6-phosphate from N-acetylneuraminate: step 5/5. With respect to regulation, allosterically activated by N-acetylglucosamine 6-phosphate (GlcNAc6P). In terms of biological role, catalyzes the reversible isomerization-deamination of glucosamine 6-phosphate (GlcN6P) to form fructose 6-phosphate (Fru6P) and ammonium ion. This Borrelia hermsii (strain HS1 / DAH) protein is Glucosamine-6-phosphate deaminase.